Here is a 486-residue protein sequence, read N- to C-terminus: Bifunctional protein GlmU (486 aa).

A pyrophosphorylase region spans residues 1–236; the sequence is MTDQNLAIVV…SWLVDGINDR (236 aa). UDP-N-acetyl-alpha-D-glucosamine contacts are provided by residues 11-14, Lys25, Gln78, and 83-84; these read LAAG and GT. Residue Asp109 coordinates Mg(2+). 4 residues coordinate UDP-N-acetyl-alpha-D-glucosamine: Gly146, Glu161, Asn176, and Asn234. Asn234 serves as a coordination point for Mg(2+). Positions 237–257 are linker; sequence AQLSEAAAKLNALTVRAWQLA. The segment at 258-486 is N-acetyltransferase; that stretch reads GVTVQDPATT…ASNAAEESGE (229 aa). The UDP-N-acetyl-alpha-D-glucosamine site is built by Arg339 and Lys357. The active-site Proton acceptor is the His369. UDP-N-acetyl-alpha-D-glucosamine contacts are provided by Tyr372 and Asn383. Acetyl-CoA contacts are provided by residues Ala386, 392-393, and Ala429; that span reads NY. The tract at residues 459 to 486 is disordered; that stretch reads RRPGTDAARAAQRNGAAEASNAAEESGE. Low complexity predominate over residues 465-486; it reads AARAAQRNGAAEASNAAEESGE.

It in the N-terminal section; belongs to the N-acetylglucosamine-1-phosphate uridyltransferase family. This sequence in the C-terminal section; belongs to the transferase hexapeptide repeat family. Homotrimer. Mg(2+) serves as cofactor.

It localises to the cytoplasm. The catalysed reaction is alpha-D-glucosamine 1-phosphate + acetyl-CoA = N-acetyl-alpha-D-glucosamine 1-phosphate + CoA + H(+). The enzyme catalyses N-acetyl-alpha-D-glucosamine 1-phosphate + UTP + H(+) = UDP-N-acetyl-alpha-D-glucosamine + diphosphate. It functions in the pathway nucleotide-sugar biosynthesis; UDP-N-acetyl-alpha-D-glucosamine biosynthesis; N-acetyl-alpha-D-glucosamine 1-phosphate from alpha-D-glucosamine 6-phosphate (route II): step 2/2. Its pathway is nucleotide-sugar biosynthesis; UDP-N-acetyl-alpha-D-glucosamine biosynthesis; UDP-N-acetyl-alpha-D-glucosamine from N-acetyl-alpha-D-glucosamine 1-phosphate: step 1/1. The protein operates within bacterial outer membrane biogenesis; LPS lipid A biosynthesis. In terms of biological role, catalyzes the last two sequential reactions in the de novo biosynthetic pathway for UDP-N-acetylglucosamine (UDP-GlcNAc). The C-terminal domain catalyzes the transfer of acetyl group from acetyl coenzyme A to glucosamine-1-phosphate (GlcN-1-P) to produce N-acetylglucosamine-1-phosphate (GlcNAc-1-P), which is converted into UDP-GlcNAc by the transfer of uridine 5-monophosphate (from uridine 5-triphosphate), a reaction catalyzed by the N-terminal domain. This Leifsonia xyli subsp. xyli (strain CTCB07) protein is Bifunctional protein GlmU.